The primary structure comprises 599 residues: Pentatricopeptide repeat-containing protein At3g62540, mitochondrial (599 aa).

The transit peptide at 1-99 (MAAAPWLYLS…RGFSSGSSNV (99 aa)) directs the protein to the mitochondrion. PPR repeat units lie at residues 194-228 (ASRTYNSMMSILAKTRQFETMVSVLEEMGTKGLLT), 230-262 (ETFTIAMKAFAAAKERKKAVGIFELMKKYKFKI), 263-293 (GVETINCLLDSLGRAKLGKEAQVLFDKLKER), 297-331 (NMMTYTVLLNGWCRVRNLIEAARIWNDMIDHGLKP), 332-366 (DIVAHNVMLEGLLRSMKKSDAIKLFHVMKSKGPCP), 367-401 (NVRSYTIMIRDFCKQSSMETAIEYFDDMVDSGLQP), 402-436 (DAAVYTCLITGFGTQKKLDTVYELLKEMQEKGHPP), 437-471 (DGKTYNALIKLMANQKMPEHGTRIYNKMIQNEIEP), 472-506 (SIHTFNMIMKSYFVARNYEMGRAVWDEMIKKGICP), and 507-541 (DDNSYTVLIRGLISEGKSREACRYLEEMLDKGMKT).

This sequence belongs to the PPR family. P subfamily.

Its subcellular location is the mitochondrion. This is Pentatricopeptide repeat-containing protein At3g62540, mitochondrial from Arabidopsis thaliana (Mouse-ear cress).